A 185-amino-acid chain; its full sequence is Ribosome maturation factor RimM (185 aa).

The PRC barrel domain maps to 108–183 (PGEFHVTDLL…RLEIKTIPGL (76 aa)).

Belongs to the RimM family. In terms of assembly, binds ribosomal protein uS19.

Its subcellular location is the cytoplasm. Its function is as follows. An accessory protein needed during the final step in the assembly of 30S ribosomal subunit, possibly for assembly of the head region. Essential for efficient processing of 16S rRNA. May be needed both before and after RbfA during the maturation of 16S rRNA. It has affinity for free ribosomal 30S subunits but not for 70S ribosomes. In Synechocystis sp. (strain ATCC 27184 / PCC 6803 / Kazusa), this protein is Ribosome maturation factor RimM.